Here is a 139-residue protein sequence, read N- to C-terminus: Small ribosomal subunit protein uS12 (139 aa).

Residues 1-44 (MPTINQLVKKPRTSKVKKSTAPALNKGYNSHKKKATDLASPQKR) form a disordered region. Over residues 9–18 (KKPRTSKVKK) the composition is skewed to basic residues. The residue at position 102 (aspartate 102) is a 3-methylthioaspartic acid.

It belongs to the universal ribosomal protein uS12 family. In terms of assembly, part of the 30S ribosomal subunit. Contacts proteins S8 and S17. May interact with IF1 in the 30S initiation complex.

With S4 and S5 plays an important role in translational accuracy. Functionally, interacts with and stabilizes bases of the 16S rRNA that are involved in tRNA selection in the A site and with the mRNA backbone. Located at the interface of the 30S and 50S subunits, it traverses the body of the 30S subunit contacting proteins on the other side and probably holding the rRNA structure together. The combined cluster of proteins S8, S12 and S17 appears to hold together the shoulder and platform of the 30S subunit. The protein is Small ribosomal subunit protein uS12 of Macrococcus caseolyticus (strain JCSC5402) (Macrococcoides caseolyticum).